The sequence spans 1070 residues: Potassium/chloride cotransporter 3 (1070 aa).

The next 15 membrane-spanning stretches (helical) occupy residues 92 to 112 (GVMLGVYLPTIQHILGVTMFI), 114 to 134 (LFWVVGMSGVAWTMALLAICC), 142 to 162 (ISLSAVATNGVVESGGAYFII), 174 to 194 (VGILFYLANTVAASMYIVGGV), 196 to 216 (VILMYLWPEMAIGGADALHDT), 228 to 248 (LYGTVFLLIQALIVAMGVKFV), 251 to 271 (LAPVSLMCVILAIAACIGGGI), 400 to 420 (FFMLMAIYFPAVTGIFTGTNM), 433 to 453 (VGTIAATLTTSAIYYILAILF), 473 to 493 (TMVVAALSWPHPAVVTVGAFL), 534 to 554 (PFLGLVLTVIIAECGILLGAV), 557 to 577 (IAEVLDFFFLMCYAFVNLIAV), 600 to 620 (LLGAALCFFIMFASSVPLACI), 791 to 811 (LVLFAEEIIHGAANDNCLIVT), and 827 to 847 (FIDIWWIVQDGGILMLIAYLL).

Expressed in the amphid sheath glia and the cephalic sheath glia. Also expressed in the inner labial and outer labial sheath and socket glia and as well as phasmid sheath glia.

The protein resides in the cell membrane. Functionally, probable potassium/chloride cotransporter that functions in the amphid sheath glial cells to regulate thermotaxis behavior. By maintaining chloride homeostasis, negatively regulates guanylate cyclase gcy-8 in the thermosensory AFD neurons and thereby controls the microvilli receptive ending morphology of the AFD neurons and thermotaxis. Modulates the temperature-evoked neuronal activity of the AFD neurons such as calcium responses to temperature gradients. Might also play a role in the chemotaxis behavior mediated by the sensory neurons AWA and AWC. This chain is Potassium/chloride cotransporter 3 (kcc-3), found in Caenorhabditis elegans.